The following is an 899-amino-acid chain: Gamma-aminobutyric acid type B receptor subunit 1 (899 aa).

The signal sequence occupies residues 1 to 19; that stretch reads MFVRSSWLLLWGTIVWASA. Topologically, residues 20-447 are extracellular; that stretch reads EPVTLHIGGT…KKHAMTVSNE (428 aa). 5 N-linked (GlcNAc...) asparagine glycosylation sites follow: N69, N266, N339, N353, and N371. The helical transmembrane segment at 448–468 threads the bilayer; that stretch reads FYYPTILFAVLGIAACVFIYL. Over 469 to 487 the chain is Cytoplasmic; sequence FTQKHHERLIIFQSQPECN. A helical transmembrane segment spans residues 488–508; it reads NILLIGCSLCLFSLFLIGLPS. Residues 509 to 525 lie on the Extracellular side of the membrane; that stretch reads DDISISESLFPLLCHAR. A helical transmembrane segment spans residues 526–546; it reads VTILLFGFTFAYGSMFAKVWI. Topologically, residues 547–616 are cytoplasmic; the sequence is VHRMGATENQ…LNQPISSSKF (70 aa). A helical membrane pass occupies residues 617–637; it reads YVIVAALTAVDVFVCFVWVLI. The Extracellular segment spans residues 638–674; it reads DPLHLTEQKFPLFTPADSEEDEMIMPVLQQCQSNQQE. A helical membrane pass occupies residues 675 to 695; sequence VWIGIIMGFKCLLLVFGTFLS. Residues 696–713 lie on the Cytoplasmic side of the membrane; it reads YETRNLKLRFINDSRFVG. Residues 714–734 form a helical membrane-spanning segment; that stretch reads LAIYNVAVMTLVTAPVVTLLI. At 735 to 741 the chain is on the extracellular side; the sequence is HGKVDAN. The chain crosses the membrane as a helical span at residues 742-762; sequence FAFISLTVLICTYISVGLIYG. The Cytoplasmic portion of the chain corresponds to 763–899; the sequence is PKIRHIIKVP…SSTSSDEILL (137 aa). Residues 791-842 adopt a coiled-coil conformation; the sequence is KVDQKRYDMLKKENETLQIQIEEKERKIHECKERLEELTKNSETEDMNAQLL. Positions 870-899 are disordered; the sequence is DLQNGNHPGQIYENDNDDDGSSTSSDEILL. Over residues 890–899 the composition is skewed to low complexity; the sequence is SSTSSDEILL.

The protein belongs to the G-protein coupled receptor 3 family. May form a heterodimer with gbb-2. In terms of tissue distribution, expressed in the nervous system, including cholinergic motor neurons, but not in GABAergic motor neurons or muscle.

It localises to the cell membrane. In terms of biological role, component of a heterodimeric G-protein coupled receptor for GABA, formed by gbb-1 and gbb-2. Within the heterodimeric GABA receptor, only gbb-1 seems to bind agonists, while gbb-2 mediates coupling to G proteins. Ligand binding causes a conformation change that triggers signaling via guanine nucleotide-binding proteins (G proteins) and modulates the activity of down-stream effectors, such as adenylate cyclase. Signaling inhibits adenylate cyclase, stimulates phospholipase A2, activates potassium channels, inactivates voltage-dependent calcium-channels and modulates inositol phospholipid hydrolysis. Calcium is required for high affinity binding to GABA. Plays a critical role in the fine-tuning of inhibitory synaptic transmission. Pre-synaptic GABA receptor inhibits neurotransmitter release by down-regulating high-voltage activated calcium channels, whereas postsynaptic GABA receptor decreases neuronal excitability by activating a prominent inwardly rectifying potassium (Kir) conductance that underlies the late inhibitory postsynaptic potentials. Along with gbb-2, may couple to the G(o)-alpha G-protein goa-1 to negatively regulate cholinergic receptor activity in the presence of high levels of acetylcholine in ventral cord motor neurons. As acetylcholine depolarizes body wall muscles, modulation of acetylcholine levels most likely results in the control of locomotory behavior. Acts in neurons to regulate lifespan, and this may be through G-protein-egl-8/PLC-beta signaling to the transcription factor daf-16/FOXO. This Caenorhabditis elegans protein is Gamma-aminobutyric acid type B receptor subunit 1.